The primary structure comprises 593 residues: Acetyl-coenzyme A transferase nodX (593 aa).

The disordered stretch occupies residues 572–593 (DEDEQGSGFRSGSGLGSGSIAD). Over residues 580 to 593 (FRSGSGLGSGSIAD) the composition is skewed to gly residues.

Belongs to the CoA-transferase III family.

Its pathway is secondary metabolite biosynthesis. In terms of biological role, acetyl-coenzyme A transferase; part of the gene cluster that mediates the biosynthesis of the indole diterpenes nodulisporic acids (NA). Nodulisporic acid A (NAA) and its chemically modified derivatives are of particular significance because of their highly potent insecticidal activity against blood-feeding arthropods and lack of observable adverse effects on mammals, in particular the tremogenicity associated with the paspaline-derived IDTs is not observed. The geranylgeranyl diphosphate (GGPP) synthase ggs1, localized outside of the cluster, is proposed to catalyze the first step in nodulisporic acid biosynthesis via conversion of farnesyl pyrophosphate and isopentyl pyrophosphate into geranylgeranyl pyrophosphate (GGPP). Condensation of indole-3-glycerol phosphate with GGPP by the prenyl transferase nodC then forms 3-geranylgeranylindole (3-GGI). Epoxidation by the FAD-dependent monooxygenase nodM leads to a single-epoxidized-GGI that is substrate of the terpene cyclase nodB for cyclization to yield emindole SB. The terminal methyl carbon, C28, of emindole SB is then oxidized by the cytochrome P450 monooxygenase nodW to produce nodulisporic acid F (NAF), the pentacyclic core of NAA. NAF is converted to nodulisporic acid E (NAE) via prenylation. This step is probably performed by one of the indole diterpene prenyltransferases nodD1 or nodD2. Several oxidation steps performed by the FAD-linked oxidoreductase nodO and one of the cytochrome P450 monooxygenase nodR, nodX or nodZ further convert NAE to nodulisporic acid D (NAD). NAD is substrate of cytochrome P450 monooxygenase nodJ to produce the precursor of nodulisporic acid C (NAC), converted to NAC by one of the indole diterpene prenyltransferases nodD1 or nodD2. The FAD-dependent monooxygenase nodY2 then oxidizes NAC to nodulisporic acid B (NAB). Finally NAB is converted to NAA by one of the cytochrome P450 monooxygenases nodR, nodX or nodZ. The polypeptide is Acetyl-coenzyme A transferase nodX (Hypoxylon pulicicidum).